Consider the following 82-residue polypeptide: Photosystem I iron-sulfur center (82 aa).

2 4Fe-4S ferredoxin-type domains span residues 2–31 (AHTVKIYDTCIGCTQCVRACPTDVLEMVPW) and 40–69 (IAAAPRTEDCVGCKRCETACPTDFLSIRVY). Cys-11, Cys-14, Cys-17, Cys-21, Cys-49, Cys-52, Cys-55, and Cys-59 together coordinate [4Fe-4S] cluster.

As to quaternary structure, the cyanobacterial PSI reaction center is composed of one copy each of PsaA,B,C,D,E,F,I,J,K,L,M and X, and forms trimeric complexes. [4Fe-4S] cluster is required as a cofactor.

The protein localises to the cellular thylakoid membrane. The enzyme catalyses reduced [plastocyanin] + hnu + oxidized [2Fe-2S]-[ferredoxin] = oxidized [plastocyanin] + reduced [2Fe-2S]-[ferredoxin]. In terms of biological role, apoprotein for the two 4Fe-4S centers FA and FB of photosystem I (PSI); essential for photochemical activity. FB is the terminal electron acceptor of PSI, donating electrons to ferredoxin. The C-terminus interacts with PsaA/B/D and helps assemble the protein into the PSI complex. Required for binding of PsaD and PsaE to PSI. PSI is a plastocyanin/cytochrome c6-ferredoxin oxidoreductase, converting photonic excitation into a charge separation, which transfers an electron from the donor P700 chlorophyll pair to the spectroscopically characterized acceptors A0, A1, FX, FA and FB in turn. The polypeptide is Photosystem I iron-sulfur center (Synechococcus sp. (strain JA-3-3Ab) (Cyanobacteria bacterium Yellowstone A-Prime)).